The following is a 691-amino-acid chain: Zinc finger protein 770 (691 aa).

Residue lysine 11 forms a Glycyl lysine isopeptide (Lys-Gly) (interchain with G-Cter in SUMO2) linkage. C2H2-type zinc fingers lie at residues 27 to 49, 55 to 77, and 81 to 103; these read YVCN…YLIH, FECD…QLTH, and FKCS…QQLH. Glycyl lysine isopeptide (Lys-Gly) (interchain with G-Cter in SUMO2) cross-links involve residues lysine 112, lysine 121, and lysine 146. 3 C2H2-type zinc fingers span residues 160 to 182, 188 to 210, and 216 to 238; these read HACT…VLIH, FKCV…QLTH, and FQCC…KQIH. Positions 258–277 are disordered; the sequence is PLPNKLNANQGGFENGEIGE. Residue lysine 262 forms a Glycyl lysine isopeptide (Lys-Gly) (interchain with G-Cter in SUMO2) linkage. The C2H2-type 7; degenerate zinc-finger motif lies at 294–318; that stretch reads FQCPKCEKCFESEQILNEHSCFAAR. Residues lysine 420 and lysine 437 each participate in a glycyl lysine isopeptide (Lys-Gly) (interchain with G-Cter in SUMO2) cross-link. 4 C2H2-type zinc fingers span residues 475-497, 503-525, 625-647, and 653-675; these read CPCD…YLIH, FGCN…EQTH, YRCS…YLIH, and FECS…QLTH. Lysine 683 participates in a covalent cross-link: Glycyl lysine isopeptide (Lys-Gly) (interchain with G-Cter in SUMO2).

Belongs to the krueppel C2H2-type zinc-finger protein family.

It is found in the nucleus. May be involved in transcriptional regulation. This is Zinc finger protein 770 (ZNF770) from Homo sapiens (Human).